We begin with the raw amino-acid sequence, 275 residues long: 2,3,4,5-tetrahydropyridine-2,6-dicarboxylate N-succinyltransferase (275 aa).

Substrate contacts are provided by R104 and D141.

It belongs to the transferase hexapeptide repeat family. As to quaternary structure, homotrimer.

The protein resides in the cytoplasm. It carries out the reaction (S)-2,3,4,5-tetrahydrodipicolinate + succinyl-CoA + H2O = (S)-2-succinylamino-6-oxoheptanedioate + CoA. Its pathway is amino-acid biosynthesis; L-lysine biosynthesis via DAP pathway; LL-2,6-diaminopimelate from (S)-tetrahydrodipicolinate (succinylase route): step 1/3. The chain is 2,3,4,5-tetrahydropyridine-2,6-dicarboxylate N-succinyltransferase from Haemophilus influenzae (strain PittEE).